Here is a 365-residue protein sequence, read N- to C-terminus: Probable L-tyrosine/L-aspartate decarboxylase (365 aa).

K224 is subject to N6-(pyridoxal phosphate)lysine.

The protein belongs to the group II decarboxylase family. MfnA subfamily. The cofactor is pyridoxal 5'-phosphate.

The catalysed reaction is L-tyrosine + H(+) = tyramine + CO2. It catalyses the reaction L-aspartate + H(+) = beta-alanine + CO2. It participates in cofactor biosynthesis; methanofuran biosynthesis. The protein operates within cofactor biosynthesis; coenzyme A biosynthesis. Its function is as follows. Catalyzes the decarboxylation of L-tyrosine to produce tyramine for methanofuran biosynthesis. Can also catalyze the decarboxylation of L-aspartate to produce beta-alanine for coenzyme A (CoA) biosynthesis. The polypeptide is Probable L-tyrosine/L-aspartate decarboxylase (Methanoregula boonei (strain DSM 21154 / JCM 14090 / 6A8)).